A 369-amino-acid chain; its full sequence is Molybdenum import ATP-binding protein ModC (369 aa).

In terms of domain architecture, ABC transporter spans 7 to 243 (PGQAGIHARF…LDLPMAMTDD (237 aa)). Residue 41–48 (GQSGSGKT) participates in ATP binding. One can recognise a Mop domain in the interval 304–369 (EGSILNVLAV…AQIKAVSLLA (66 aa)).

This sequence belongs to the ABC transporter superfamily. Molybdate importer (TC 3.A.1.8) family. As to quaternary structure, the complex is composed of two ATP-binding proteins (ModC), two transmembrane proteins (ModB) and a solute-binding protein (ModA).

The protein resides in the cell inner membrane. It carries out the reaction molybdate(out) + ATP + H2O = molybdate(in) + ADP + phosphate + H(+). Part of the ABC transporter complex ModABC involved in molybdenum import. Responsible for energy coupling to the transport system. The protein is Molybdenum import ATP-binding protein ModC of Bordetella bronchiseptica (strain ATCC BAA-588 / NCTC 13252 / RB50) (Alcaligenes bronchisepticus).